A 229-amino-acid polypeptide reads, in one-letter code: Large ribosomal subunit protein uL1 (229 aa).

It belongs to the universal ribosomal protein uL1 family. In terms of assembly, part of the 50S ribosomal subunit.

In terms of biological role, binds directly to 23S rRNA. The L1 stalk is quite mobile in the ribosome, and is involved in E site tRNA release. Its function is as follows. Protein L1 is also a translational repressor protein, it controls the translation of the L11 operon by binding to its mRNA. The protein is Large ribosomal subunit protein uL1 of Leifsonia xyli subsp. xyli (strain CTCB07).